A 91-amino-acid polypeptide reads, in one-letter code: Acyl carrier protein (91 aa).

The region spanning 6-81 (EEIIAELGQI…DIVAYIQKLE (76 aa)) is the Carrier domain. Ser-41 bears the O-(pantetheine 4'-phosphoryl)serine mark.

It belongs to the acyl carrier protein (ACP) family. 4'-phosphopantetheine is transferred from CoA to a specific serine of apo-ACP by AcpS. This modification is essential for activity because fatty acids are bound in thioester linkage to the sulfhydryl of the prosthetic group.

It localises to the cytoplasm. The protein operates within lipid metabolism; fatty acid biosynthesis. Carrier of the growing fatty acid chain in fatty acid biosynthesis. This Rhodococcus erythropolis (strain PR4 / NBRC 100887) protein is Acyl carrier protein.